The chain runs to 261 residues: Triosephosphate isomerase (261 aa).

N10–K12 is a binding site for substrate. H100 functions as the Electrophile in the catalytic mechanism. Catalysis depends on E172, which acts as the Proton acceptor. Substrate-binding positions include G178, S218, and G239 to G240.

The protein belongs to the triosephosphate isomerase family. Homodimer.

The protein resides in the cytoplasm. The enzyme catalyses D-glyceraldehyde 3-phosphate = dihydroxyacetone phosphate. It functions in the pathway carbohydrate biosynthesis; gluconeogenesis. Its pathway is carbohydrate degradation; glycolysis; D-glyceraldehyde 3-phosphate from glycerone phosphate: step 1/1. Involved in the gluconeogenesis. Catalyzes stereospecifically the conversion of dihydroxyacetone phosphate (DHAP) to D-glyceraldehyde-3-phosphate (G3P). This Saccharopolyspora erythraea (strain ATCC 11635 / DSM 40517 / JCM 4748 / NBRC 13426 / NCIMB 8594 / NRRL 2338) protein is Triosephosphate isomerase.